A 286-amino-acid chain; its full sequence is MNDAVTLRSGCKVNLDLHITSRRDDGYHEIDSLFLPLDEPHDELVVTVGDAPGITVTCAIQGIDPTRNTVTRAYDAYAEASGFRPPLRVELRKGVPHGAGLGGGSANAAAILNHLESIAPHPLGRETLCRLAARIGADVPFFIHAVPCRASGIGEIITPVAWPYKGFTLLLACPQVQVSTAWAYGALDAAEEKQLRVRGCLTTGGVADRNSFSRESWLHNSFEPVVFASHPELRSLKEALLRHGAAAALMSGSGASVFALFRRREDAEAAFEQLKGHDIRVYQHLL.

K12 is a catalytic residue. 96–106 (PHGAGLGGGSA) contributes to the ATP binding site. The active site involves D138.

Belongs to the GHMP kinase family. IspE subfamily.

The enzyme catalyses 4-CDP-2-C-methyl-D-erythritol + ATP = 4-CDP-2-C-methyl-D-erythritol 2-phosphate + ADP + H(+). It functions in the pathway isoprenoid biosynthesis; isopentenyl diphosphate biosynthesis via DXP pathway; isopentenyl diphosphate from 1-deoxy-D-xylulose 5-phosphate: step 3/6. Catalyzes the phosphorylation of the position 2 hydroxy group of 4-diphosphocytidyl-2C-methyl-D-erythritol. This chain is 4-diphosphocytidyl-2-C-methyl-D-erythritol kinase, found in Nitratidesulfovibrio vulgaris (strain DP4) (Desulfovibrio vulgaris).